An 800-amino-acid polypeptide reads, in one-letter code: MRVIRAVATLHAGRAAAVRQGVRSVSLGACRAAVETPSLRSAGSQFESRRLFSRSSYLRNANMTAAEIALKQAKELAASNMTPEAAAARMTPEEAKRLARVRNIGIAAHIDSGKTTVTERILFYTGRVKAIHEVRGRDGVGAKMDSMELERERGITIQSAATFADWKKKEKGVEETYHINLIDTPGHIDFTIEVERAMRVLDGAVMVLCAVSGVQSQTITVDRQMKRYNVPRISFVNKMDRMGANPWKAVEQINTKLKIPAAAIQVPIGSEKELEGVVDLIDMKCIRNDGQRGVNLKISKEIPAEIKELCEQKRQELIEKLADVDDEIAEMFLEEQTPTPEQIKAAIRRATIACKFTPVLMGSAIADKGVQPMLDAVCDYLPNPNDTDNTALDRSKGEQPVKLVPYNSLPFVGLAFKLEENPYGQLTYMRVYQGSLKKGAYLYNSRGNKKVRIPRIVRMHSNEMEDVNEIGAGEICAVFGVDCASGDTFTDGGLPYSLSSMYVPDAVMSLSIKPKRSSDADAFSKAMNRFMREDPTFRLHVDEESEETIISGMGELHLEIYVERLRREYKVECETGQPRVSYRETITQKAEFDYLLKRQSGGPGDYARVVGWIEPNPNGGEDNHFESRVVGGTIPDKYISACQKGFQEACIKGPLLGHKVIGSSMVITDGATHVTDSSDYAFNLAAQMAFGKAFTAAGGQVLEPLMKTTISAPAEFQGNILMLMNKRGTIVDTEVGADEFTMVADCSLNAMFGFSTHLRAATQGKGEFSMEFSHYAPAPPHLQKELVQKYQKELEAKRTK.

A mitochondrion-targeting transit peptide spans 1–59; sequence MRVIRAVATLHAGRAAAVRQGVRSVSLGACRAAVETPSLRSAGSQFESRRLFSRSSYLR. The 287-residue stretch at 99-385 folds into the tr-type G domain; the sequence is ARVRNIGIAA…AVCDYLPNPN (287 aa). GTP-binding positions include 108–115, 183–187, and 237–240; these read AHIDSGKT, DTPGH, and NKMD.

This sequence belongs to the TRAFAC class translation factor GTPase superfamily. Classic translation factor GTPase family. EF-G/EF-2 subfamily.

It is found in the mitochondrion. Its pathway is protein biosynthesis; polypeptide chain elongation. In terms of biological role, mitochondrial GTPase that catalyzes the GTP-dependent ribosomal translocation step during translation elongation. During this step, the ribosome changes from the pre-translocational (PRE) to the post-translocational (POST) state as the newly formed A-site-bound peptidyl-tRNA and P-site-bound deacylated tRNA move to the P and E sites, respectively. Catalyzes the coordinated movement of the two tRNA molecules, the mRNA and conformational changes in the ribosome. This is Elongation factor G, mitochondrial (mef1) from Neurospora crassa (strain ATCC 24698 / 74-OR23-1A / CBS 708.71 / DSM 1257 / FGSC 987).